The chain runs to 286 residues: Translocon-associated protein subunit alpha (286 aa).

The first 23 residues, 1 to 23, serve as a signal peptide directing secretion; it reads MRVLPRLLLLLLLAFPAAVLLRG. At 24–207 the chain is on the lumenal side; that stretch reads GPGGSLVAAQ…EREDGLDGET (184 aa). Over residues 37–75 the composition is skewed to acidic residues; it reads EDEETVEDSIIEDEDDEAEVEEDEPTDLAEDKEEEDVSG. Residues 37 to 83 form a disordered region; sequence EDEETVEDSIIEDEDDEAEVEEDEPTDLAEDKEEEDVSGEPEASPSA. 2 N-linked (GlcNAc...) asparagine glycosylation sites follow: N136 and N191. A helical transmembrane segment spans residues 208–228; the sequence is IFMYMFLAGLGLLVVVGLHQL. The Cytoplasmic segment spans residues 229 to 286; sequence LESRKRKRPIQKVEMGTSSQNDVDMSWIPQETLNQINKASPRRLPRKRAQKRSVGSDE. S247 is modified (phosphoserine). T260 is subject to Phosphothreonine. The disordered stretch occupies residues 261–286; that stretch reads LNQINKASPRRLPRKRAQKRSVGSDE. A Phosphoserine modification is found at S268. A compositionally biased stretch (basic residues) spans 268 to 279; that stretch reads SPRRLPRKRAQK.

The protein belongs to the TRAP-alpha family. In terms of assembly, heterotetramer of TRAP-alpha, TRAP-beta, TRAP-delta and TRAP-gamma. Interacts with palmitoylated calnexin (CALX), the interaction is required for efficient folding of glycosylated proteins. Phosphorylated in its cytoplasmic tail.

The protein resides in the endoplasmic reticulum membrane. Functionally, TRAP proteins are part of a complex whose function is to bind calcium to the ER membrane and thereby regulate the retention of ER resident proteins. May be involved in the recycling of the translocation apparatus after completion of the translocation process or may function as a membrane-bound chaperone facilitating folding of translocated proteins. This is Translocon-associated protein subunit alpha (SSR1) from Canis lupus familiaris (Dog).